The chain runs to 289 residues: E3 ubiquitin-protein ligase MARCHF5 (289 aa).

The RING-CH-type zinc finger occupies 4–73 (VDEPPEKHCW…PQCGTEYRIV (70 aa)). C12, C15, C31, C33, H41, C44, C63, and C66 together coordinate Zn(2+). The next 4 helical transmembrane spans lie at 97-117 (FAAA…YGAV), 137-157 (PLFL…GKMI), 202-222 (LSVS…NLVG), and 236-256 (TILG…YFKQ).

It is found in the mitochondrion outer membrane. It localises to the endoplasmic reticulum membrane. The enzyme catalyses S-ubiquitinyl-[E2 ubiquitin-conjugating enzyme]-L-cysteine + [acceptor protein]-L-lysine = [E2 ubiquitin-conjugating enzyme]-L-cysteine + N(6)-ubiquitinyl-[acceptor protein]-L-lysine.. The protein operates within protein modification; protein ubiquitination. Mitochondrial E3 ubiquitin-protein ligase that plays a crucial role in the control of mitochondrial morphology by acting as a positive regulator of mitochondrial fission. May play a role in the prevention of cell senescence acting as a regulator of mitochondrial quality control. This chain is E3 ubiquitin-protein ligase MARCHF5 (marchf5), found in Danio rerio (Zebrafish).